The primary structure comprises 73 residues: MNLGLAIFLIIIALLIGLVGGFYGARAYMKKYFQDNPPISEDMIAAMMAQMGQKPSTKKLNQVMNMMKHQQQK.

A helical membrane pass occupies residues 3–23 (LGLAIFLIIIALLIGLVGGFY).

The protein belongs to the UPF0154 family.

It localises to the cell membrane. In Lactobacillus gasseri (strain ATCC 33323 / DSM 20243 / BCRC 14619 / CIP 102991 / JCM 1131 / KCTC 3163 / NCIMB 11718 / NCTC 13722 / AM63), this protein is UPF0154 protein LGAS_0795.